Consider the following 480-residue polypeptide: Siroheme synthase 2 (480 aa).

The interval 1-202 (MDYLPMFARL…QDWQSAETWL (202 aa)) is precorrin-2 dehydrogenase /sirohydrochlorin ferrochelatase. Residues 22–23 (EV) and 43–44 (PE) contribute to the NAD(+) site. Serine 126 is subject to Phosphoserine. The uroporphyrinogen-III C-methyltransferase stretch occupies residues 214–480 (GEVVLVGAGP…GCDLKLVNLA (267 aa)). Proline 223 is an S-adenosyl-L-methionine binding site. Aspartate 246 serves as the catalytic Proton acceptor. Catalysis depends on lysine 268, which acts as the Proton donor. S-adenosyl-L-methionine contacts are provided by residues 299–301 (GGD), 329–330 (TA), methionine 381, and glycine 410.

This sequence in the N-terminal section; belongs to the precorrin-2 dehydrogenase / sirohydrochlorin ferrochelatase family. In the C-terminal section; belongs to the precorrin methyltransferase family.

The enzyme catalyses uroporphyrinogen III + 2 S-adenosyl-L-methionine = precorrin-2 + 2 S-adenosyl-L-homocysteine + H(+). It carries out the reaction precorrin-2 + NAD(+) = sirohydrochlorin + NADH + 2 H(+). The catalysed reaction is siroheme + 2 H(+) = sirohydrochlorin + Fe(2+). Its pathway is cofactor biosynthesis; adenosylcobalamin biosynthesis; precorrin-2 from uroporphyrinogen III: step 1/1. The protein operates within cofactor biosynthesis; adenosylcobalamin biosynthesis; sirohydrochlorin from precorrin-2: step 1/1. It functions in the pathway porphyrin-containing compound metabolism; siroheme biosynthesis; precorrin-2 from uroporphyrinogen III: step 1/1. It participates in porphyrin-containing compound metabolism; siroheme biosynthesis; siroheme from sirohydrochlorin: step 1/1. Its pathway is porphyrin-containing compound metabolism; siroheme biosynthesis; sirohydrochlorin from precorrin-2: step 1/1. In terms of biological role, multifunctional enzyme that catalyzes the SAM-dependent methylations of uroporphyrinogen III at position C-2 and C-7 to form precorrin-2 via precorrin-1. Then it catalyzes the NAD-dependent ring dehydrogenation of precorrin-2 to yield sirohydrochlorin. Finally, it catalyzes the ferrochelation of sirohydrochlorin to yield siroheme. The chain is Siroheme synthase 2 from Aeromonas salmonicida (strain A449).